The following is a 311-amino-acid chain: Ceroid-lipofuscinosis neuronal protein 6 (311 aa).

The next 7 helical transmembrane spans lie at Trp-56–Leu-76, Val-81–Ile-101, Ser-111–Asp-131, Cys-179–Ala-199, Ser-204–Leu-224, Val-225–Val-245, and Leu-260–Leu-280.

In terms of assembly, interacts with CRMP2. Interacts with CLN5. Interacts with CLN3.

It is found in the endoplasmic reticulum membrane. The protein resides in the endoplasmic reticulum. The protein is Ceroid-lipofuscinosis neuronal protein 6 (CLN6) of Homo sapiens (Human).